The sequence spans 35 residues: Delta-theraphotoxin-Hm1a (35 aa).

Intrachain disulfides connect cysteine 2–cysteine 16, cysteine 9–cysteine 21, and cysteine 15–cysteine 28.

The protein belongs to the neurotoxin 10 (Hwtx-1) family. 09 (HaTx) subfamily. In terms of tissue distribution, expressed by the venom gland.

Its subcellular location is the secreted. Its function is as follows. Gating-modifier toxin that potently inhibits inactivation of the mammalian Nav1.1/SCN1A sodium channel (EC(50)=38 nM). Also moderately inhibits inactivation of Nav1.2/SCN2A (EC(50)=236 nM) and Nav1.3/SCN3A (EC(50)=220 nM) when the channels are expressed in oocytes without the beta-1 auxiliary subunit. Does not inhibit inactivation of Nav1.2/SCN2A when the channel is coexpressed with the beta-1 auxiliary subunit. When tested on Nav1.1/SCN1A channel, it enhances peak current amplitude and potently delays channel inactivation in a dose-dependent manner, leading to a large sustained current. It has no effect on the voltage-dependence of steady-state activation, and induces a depolarizing shift in the voltage dependence of inactivation. In addition, it does not modify the recovery from fast inactivation in Nav1.1/SCN1A. The binding affinity and subtype selectivity of the toxin towards Nav1.1/SCN1A channel is determined by residues within both the S1-S2 and S3-S4 loops of the domain IV voltage sensor of the channel. This toxin also weakly inhibits several subtypes of voltage-gated potassium channels. It moderately blocks Kv2.1/KCNB1 (23% inhibition at 100 nM), Kv2.2/KCNB2 (19.7% at 100 nM and 51% at 300 nM), Kv4.1/KCND1 (IC(50)=280 nM), Kv4.2/KCND2 (39% at 300 nM) and Kv4.3/KCND3 (43% at 300 nM). In vivo, intracerebroventricular injection into mice elicits convulsions, spasms, tremors and rapid death. When injected into mouse hindpaw, the toxin elicits an immediate and robust response to pain. However, intraplantar injection of toxin does not cause neurogenic inflammation or alter sensitivity to heat, indicative of a modality-specific effect on mechanosensitive neurons. In Dravet syndrome mice model, intracerebroventricular infusion of this peptide rescues mice from seizures and premature death. This chain is Delta-theraphotoxin-Hm1a, found in Heteroscodra maculata (Togo starburst tarantula).